A 496-amino-acid chain; its full sequence is Geranylhydroquinone 3''-hydroxylase CYP76B74 (496 aa).

The helical transmembrane segment at 3–23 (YTTILVGFLIGFVLFKALTRK) threads the bilayer. Cys436 serves as a coordination point for heme.

Belongs to the cytochrome P450 family. The cofactor is heme.

It is found in the endoplasmic reticulum membrane. The catalysed reaction is (2E)-geranylhydroquinone + reduced [NADPH--hemoprotein reductase] + O2 = (2Z)-3''-hydroxygeranylhydroquinone + oxidized [NADPH--hemoprotein reductase] + H2O + H(+). Hydroxylase involved in the biosynthesis pathway of the red naphthoquinone pigment shikonin. Catalyzes the key step C-3''-hydroxylation of the prenylated phenolic intermediate geranylhydroquinone to form 3''-hydroxygeranylhydroquinone. The chain is Geranylhydroquinone 3''-hydroxylase CYP76B74 from Arnebia euchroma (Pink arnebia).